Consider the following 132-residue polypeptide: Auxin-responsive protein SAUR72 (132 aa).

The segment at 22–54 is disordered; the sequence is SDSQRPSRRSESFLRSSVTRRSKKQTSSVPEGH. Basic and acidic residues predominate over residues 23-33; the sequence is DSQRPSRRSES.

It belongs to the ARG7 family. In terms of assembly, interacts with and inhibits PP2C-D subfamily of type 2C phosphatases such as PP2C67/PP2C-D1. Highly expressed in the steles of roots and hypocotyls.

The protein localises to the cytoplasm. Functionally, provide a mechanistic link between auxin and plasma membrane H(+)-ATPases (PM H(+)-ATPases, e.g. AHA1 and AHA2), and triggers PM H(+)-ATPases activity by promoting phosphorylation of their C-terminal autoinhibitory domain as a result of PP2C-D subfamily of type 2C phosphatases inhibition, thus leading to the acidification of the apoplast and the facilitation of solutes and water uptake to drive cell expansion. Plays a role in the regulation of cell expansion, root meristem patterning and auxin transport. The protein is Auxin-responsive protein SAUR72 of Arabidopsis thaliana (Mouse-ear cress).